Reading from the N-terminus, the 345-residue chain is Meiotic recombination protein rec12 (345 aa).

Residues 5–137 (DKKKVVRSWI…LNVEASAKGL (133 aa)) enclose the Topo IIA-type catalytic domain. Tyr98 functions as the O-(5'-phospho-DNA)-tyrosine intermediate in the catalytic mechanism. Residues Glu179 and Asp229 each coordinate Mg(2+).

Belongs to the TOP6A family. Component of the DSB catalytic core (DSBC) complex, composed of at least rec12, rec6 and rec14. The complex interacts with mde2. Mg(2+) serves as cofactor.

It localises to the cytoplasm. The protein resides in the nucleus. The catalysed reaction is ATP-dependent breakage, passage and rejoining of double-stranded DNA.. Functionally, required for formation of the double-strand breaks (DSBs) that initiate meiotic recombination. Required for crossover recombination and chiasmatic segregation of chromosomes during meiosis I. Also involved in the faithful equational segregation of chromosomes during meiosis II. This is Meiotic recombination protein rec12 from Schizosaccharomyces pombe (strain 972 / ATCC 24843) (Fission yeast).